Here is a 499-residue protein sequence, read N- to C-terminus: Aspartyl/glutamyl-tRNA(Asn/Gln) amidotransferase subunit B (499 aa).

The protein belongs to the GatB/GatE family. GatB subfamily. As to quaternary structure, heterotrimer of A, B and C subunits.

It catalyses the reaction L-glutamyl-tRNA(Gln) + L-glutamine + ATP + H2O = L-glutaminyl-tRNA(Gln) + L-glutamate + ADP + phosphate + H(+). The catalysed reaction is L-aspartyl-tRNA(Asn) + L-glutamine + ATP + H2O = L-asparaginyl-tRNA(Asn) + L-glutamate + ADP + phosphate + 2 H(+). Its function is as follows. Allows the formation of correctly charged Asn-tRNA(Asn) or Gln-tRNA(Gln) through the transamidation of misacylated Asp-tRNA(Asn) or Glu-tRNA(Gln) in organisms which lack either or both of asparaginyl-tRNA or glutaminyl-tRNA synthetases. The reaction takes place in the presence of glutamine and ATP through an activated phospho-Asp-tRNA(Asn) or phospho-Glu-tRNA(Gln). The protein is Aspartyl/glutamyl-tRNA(Asn/Gln) amidotransferase subunit B of Bifidobacterium longum (strain DJO10A).